A 429-amino-acid chain; its full sequence is Nocturnin (429 aa).

A mitochondrion-targeting transit peptide spans 1 to 73 (MYQSPRRLCS…SMGNGTSRLY (73 aa)). The tract at residues 21 to 68 (RRTLVPGPRRTLAPPVLGSRPKSPQLQAAAASGAARSRPRTVSSMGNG) is disordered. E193 serves as a coordination point for Mg(2+). Residues E193, 217–219 (KPW), N261, 284–287 (HLKA), and 322–324 (DFN) contribute to the substrate site. The segment at 341-351 (NLNSAYKLLSP) is interaction with PPARG. H412 is a substrate binding site.

The protein belongs to the CCR4/nocturin family. In terms of assembly, interacts with PPARG. Requires Mg(2+) as cofactor. As to expression, highly expressed in the differentiated adipocyte (at protein level). Ubiquitous.

The protein resides in the cytoplasm. It localises to the nucleus. The protein localises to the perinuclear region. Its subcellular location is the mitochondrion. The catalysed reaction is NADP(+) + H2O = phosphate + NAD(+). It carries out the reaction NADPH + H2O = phosphate + NADH. In terms of biological role, phosphatase which catalyzes the conversion of NADP(+) to NAD(+) and of NADPH to NADH. Shows a small preference for NADPH over NADP(+). Represses translation and promotes degradation of target mRNA molecules. Plays an important role in post-transcriptional regulation of metabolic genes under circadian control. Exerts a rhythmic post-transcriptional control of genes necessary for metabolic functions including nutrient absorption, glucose/insulin sensitivity, lipid metabolism, adipogenesis, inflammation and osteogenesis. Plays an important role in favoring adipogenesis over osteoblastogenesis and acts as a key regulator of the adipogenesis/osteogenesis balance. Promotes adipogenesis by facilitating PPARG nuclear translocation which activates its transcriptional activity. Regulates circadian expression of NOS2 in the liver and negatively regulates the circadian expression of IGF1 in the bone. Critical for proper development of early embryos. The sequence is that of Nocturnin from Mus musculus (Mouse).